The following is a 169-amino-acid chain: Alpha-S2-casein-like B (169 aa).

The signal sequence occupies residues 1-15 (MKFIILTCLLAVALA).

It belongs to the alpha-casein family. In terms of tissue distribution, mammary gland specific. Secreted in milk.

The protein resides in the secreted. Its function is as follows. Important role in the capacity of milk to transport calcium phosphate. The sequence is that of Alpha-S2-casein-like B (Csn1s2b) from Rattus norvegicus (Rat).